Reading from the N-terminus, the 199-residue chain is MQYPEPISKLIDSYMKLPGIGSKTATRLAFYTIDMQEDDVTEFAQSLISAKRDLSYCSICGNITESDPCMICADKSRDNSKVVVVEQPKDVMSLERMNEYHGLYHVLHGVLSPIEGKGPEDINIASLLRRLQKNEAIKEVIIATNATPEGEATAMYIARLVKPANIKVTRLAHGLAVGSDIEYADEMTLFKAIEGRQEI.

The C4-type zinc finger occupies 57–72 (CSICGNITESDPCMIC). Residues 80-176 (SKVVVVEQPK…KVTRLAHGLA (97 aa)) enclose the Toprim domain.

This sequence belongs to the RecR family.

May play a role in DNA repair. It seems to be involved in an RecBC-independent recombinational process of DNA repair. It may act with RecF and RecO. The chain is Recombination protein RecR from Ligilactobacillus salivarius (strain UCC118) (Lactobacillus salivarius).